A 623-amino-acid polypeptide reads, in one-letter code: Glutamyl-tRNA(Gln) amidotransferase subunit E (623 aa).

It belongs to the GatB/GatE family. GatE subfamily. Heterodimer of GatD and GatE.

It catalyses the reaction L-glutamyl-tRNA(Gln) + L-glutamine + ATP + H2O = L-glutaminyl-tRNA(Gln) + L-glutamate + ADP + phosphate + H(+). Allows the formation of correctly charged Gln-tRNA(Gln) through the transamidation of misacylated Glu-tRNA(Gln) in organisms which lack glutaminyl-tRNA synthetase. The reaction takes place in the presence of glutamine and ATP through an activated gamma-phospho-Glu-tRNA(Gln). The GatDE system is specific for glutamate and does not act on aspartate. The sequence is that of Glutamyl-tRNA(Gln) amidotransferase subunit E from Haloarcula marismortui (strain ATCC 43049 / DSM 3752 / JCM 8966 / VKM B-1809) (Halobacterium marismortui).